Here is a 292-residue protein sequence, read N- to C-terminus: Ribosomal protein L11 methyltransferase (292 aa).

S-adenosyl-L-methionine contacts are provided by T143, G164, D186, and N228.

It belongs to the methyltransferase superfamily. PrmA family.

The protein localises to the cytoplasm. It carries out the reaction L-lysyl-[protein] + 3 S-adenosyl-L-methionine = N(6),N(6),N(6)-trimethyl-L-lysyl-[protein] + 3 S-adenosyl-L-homocysteine + 3 H(+). In terms of biological role, methylates ribosomal protein L11. In Tolumonas auensis (strain DSM 9187 / NBRC 110442 / TA 4), this protein is Ribosomal protein L11 methyltransferase.